Here is a 592-residue protein sequence, read N- to C-terminus: Laccase PFICI_06862 (592 aa).

Positions 1–19 are cleaved as a signal peptide; sequence MYIQTQFASLLLLAGTSLA. N-linked (GlcNAc...) asparagine glycosylation is present at asparagine 26. 2 Plastocyanin-like domains span residues 32–142 and 173–350; these read QWSS…WIAP and VVIS…RYPG. Histidine 78, histidine 80, histidine 123, and histidine 125 together coordinate Cu cation. N-linked (GlcNAc...) asparagine glycans are attached at residues asparagine 370, asparagine 407, and asparagine 454. Positions 445 to 563 constitute a Plastocyanin-like 3 domain; it reads SDVQGGSMQN…AGQQVVLLEG (119 aa). Histidine 475 is a Cu cation binding site. A glycan (N-linked (GlcNAc...) asparagine) is linked at asparagine 524.

Belongs to the multicopper oxidase family.

The protein localises to the cell surface. It functions in the pathway pigment biosynthesis; melanin biosynthesis. Its function is as follows. Laccase involved the biosynthesis of dihydroxynaphthalene (DHN)-melanin, a bluish-green pigment forming a dark layer in the conidial wall that protects the conidia from UV radiations. The first step of the pathway is the production of the pentaketide 1,3,6,8-tetrahydroxynaphthalene (1,3,6,8-THN or T4HN) by the polyketide synthase PfmaE though condensation of acetyl-CoA with malonyl-CoA. T4HN is not stable and easily oxidizes into the stable form flaviolin. T4HN is also substrate of the hydroxynaphthalene reductase PfmaG to yield scytalone. The scytalone dehydratase PfmaJ then reduces scytalone to 1,3,8-THN. 1,3,8-THN is then substrate of the hydroxynaphthalene reductase PfmaI to yield vermelone. Vermelone is further converted by the multicopper oxidase PfmaD to 1,8-DHN. Finally the laccase PFICI_06862 transforms 1,8-DHN to DHN-melanin. The roles of the 5-oxoprolinase PfmaA and the proline iminopeptidase PfmaB within the cluster have not been elucidated yet. The sequence is that of Laccase PFICI_06862 from Pestalotiopsis fici (strain W106-1 / CGMCC3.15140).